Reading from the N-terminus, the 282-residue chain is MANQLILLKKDFFTDEQQAVTVADRYPQDVFAEHTHEFCELVMVWRGNGLHVLNERPYRITRGDLFYIRAEDKHSYTSVNDLVLQNIIYCPERLKLNVNWQAMIPGFQGAQWHPHWRLGSMGMNQARQVINQLEHESNGRDPLANEMAELLFGQLVMTLKRHRYATDDLPATSRETLLDKLITALANSLERPFALDAFCQQEQCSERVLRQQFRAQTGMTINQYLRQVRICHAQYLLQHSPLMISEISMQCGFEDSNYFSVVFTRETGMTPSQWRHLSNQSD.

Residues 179–277 (DKLITALANS…GMTPSQWRHL (99 aa)) enclose the HTH araC/xylS-type domain. 2 DNA-binding regions (H-T-H motif) span residues 196–217 (DAFCQQEQCSERVLRQQFRAQT) and 244–267 (ISEISMQCGFEDSNYFSVVFTRET).

In terms of assembly, binds DNA as a dimer.

The protein localises to the cytoplasm. Activates expression of the rhaSR operon in response to L-rhamnose. In Salmonella schwarzengrund (strain CVM19633), this protein is HTH-type transcriptional activator RhaR.